The sequence spans 260 residues: Exosome complex component Rrp42 (260 aa).

The protein belongs to the RNase PH family. Rrp42 subfamily. As to quaternary structure, component of the archaeal exosome complex. Forms a hexameric ring-like arrangement composed of 3 Rrp41-Rrp42 heterodimers. The hexameric ring associates with a trimer of Rrp4 and/or Csl4 subunits.

The protein localises to the cytoplasm. Non-catalytic component of the exosome, which is a complex involved in RNA degradation. Contributes to the structuring of the Rrp41 active site. This Thermoplasma volcanium (strain ATCC 51530 / DSM 4299 / JCM 9571 / NBRC 15438 / GSS1) protein is Exosome complex component Rrp42.